The sequence spans 433 residues: Histidinol dehydrogenase (433 aa).

NAD(+) contacts are provided by Tyr-130, Gln-191, and Asn-214. Ser-237, Gln-259, and His-262 together coordinate substrate. Zn(2+) contacts are provided by Gln-259 and His-262. Catalysis depends on proton acceptor residues Glu-327 and His-328. His-328, Asp-361, Glu-415, and His-420 together coordinate substrate. Residue Asp-361 coordinates Zn(2+). His-420 is a Zn(2+) binding site.

The protein belongs to the histidinol dehydrogenase family. Zn(2+) is required as a cofactor.

The enzyme catalyses L-histidinol + 2 NAD(+) + H2O = L-histidine + 2 NADH + 3 H(+). It participates in amino-acid biosynthesis; L-histidine biosynthesis; L-histidine from 5-phospho-alpha-D-ribose 1-diphosphate: step 9/9. Catalyzes the sequential NAD-dependent oxidations of L-histidinol to L-histidinaldehyde and then to L-histidine. The chain is Histidinol dehydrogenase from Ruegeria pomeroyi (strain ATCC 700808 / DSM 15171 / DSS-3) (Silicibacter pomeroyi).